A 130-amino-acid chain; its full sequence is Histone H2A type 1-F (130 aa).

The interval 1 to 22 (MSGRGKQGGKARAKAKTRSSRA) is disordered. The residue at position 2 (S2) is a Phosphoserine; by RPS6KA5. R4 carries the post-translational modification Citrulline; alternate. A Symmetric dimethylarginine; by PRMT5; alternate modification is found at R4. Residues K6 and K10 each carry the N6-(2-hydroxyisobutyryl)lysine modification. The segment covering 7–19 (QGGKARAKAKTRS) has biased composition (basic residues). K10 carries the N6-lactoyllysine; alternate modification. K37 is subject to N6-(2-hydroxyisobutyryl)lysine; alternate. K37 carries the post-translational modification N6-(beta-hydroxybutyryl)lysine; alternate. N6-crotonyllysine; alternate is present on K37. Residues K75, K76, and K96 each carry the N6-(2-hydroxyisobutyryl)lysine modification. An N6-glutaryllysine; alternate modification is found at K96. An N5-methylglutamine modification is found at Q105. Residue K119 is modified to N6-(2-hydroxyisobutyryl)lysine; alternate. K119 and K120 each carry N6-crotonyllysine; alternate. K119 and K120 each carry N6-glutaryllysine; alternate. A Glycyl lysine isopeptide (Lys-Gly) (interchain with G-Cter in ubiquitin); alternate cross-link involves residue K120. Residue T121 is modified to Phosphothreonine; by DCAF1. At K126 the chain carries N6-crotonyllysine; alternate. K126 carries the N6-glutaryllysine; alternate modification.

Belongs to the histone H2A family. As to quaternary structure, the nucleosome is a histone octamer containing two molecules each of H2A, H2B, H3 and H4 assembled in one H3-H4 heterotetramer and two H2A-H2B heterodimers. The octamer wraps approximately 147 bp of DNA. Deiminated on Arg-4 in granulocytes upon calcium entry. Post-translationally, monoubiquitination of Lys-120 (H2AK119Ub) by RING1, TRIM37 and RNF2/RING2 complex gives a specific tag for epigenetic transcriptional repression and participates in X chromosome inactivation of female mammals. It is involved in the initiation of both imprinted and random X inactivation. Ubiquitinated H2A is enriched in inactive X chromosome chromatin. Ubiquitination of H2A functions downstream of methylation of 'Lys-27' of histone H3 (H3K27me). H2AK119Ub by RNF2/RING2 can also be induced by ultraviolet and may be involved in DNA repair. Following DNA double-strand breaks (DSBs), it is ubiquitinated through 'Lys-63' linkage of ubiquitin moieties by the E2 ligase UBE2N and the E3 ligases RNF8 and RNF168, leading to the recruitment of repair proteins to sites of DNA damage. Ubiquitination at Lys-14 and Lys-16 (H2AK13Ub and H2AK15Ub, respectively) in response to DNA damage is initiated by RNF168 that mediates monoubiquitination at these 2 sites, and 'Lys-63'-linked ubiquitin are then conjugated to monoubiquitin; RNF8 is able to extend 'Lys-63'-linked ubiquitin chains in vitro. H2AK119Ub and ionizing radiation-induced 'Lys-63'-linked ubiquitination (H2AK13Ub and H2AK15Ub) are distinct events. In terms of processing, phosphorylation on Ser-2 (H2AS1ph) is enhanced during mitosis. Phosphorylation on Ser-2 by RPS6KA5/MSK1 directly represses transcription. Acetylation of H3 inhibits Ser-2 phosphorylation by RPS6KA5/MSK1. Phosphorylation at Thr-121 (H2AT120ph) by DCAF1 is present in the regulatory region of many tumor suppresor genes and down-regulates their transcription. Symmetric dimethylation on Arg-4 by the PRDM1/PRMT5 complex may play a crucial role in the germ-cell lineage. Post-translationally, glutamine methylation at Gln-105 (H2AQ104me) by FBL is specifically dedicated to polymerase I. It is present at 35S ribosomal DNA locus and impairs binding of the FACT complex. In terms of processing, crotonylation (Kcr) is specifically present in male germ cells and marks testis-specific genes in post-meiotic cells, including X-linked genes that escape sex chromosome inactivation in haploid cells. Crotonylation marks active promoters and enhancers and confers resistance to transcriptional repressors. It is also associated with post-meiotically activated genes on autosomes. Lactylated in macrophages by EP300/P300 by using lactoyl-CoA directly derived from endogenous or exogenous lactate, leading to stimulates gene transcription.

It localises to the nucleus. Its subcellular location is the chromosome. Its function is as follows. Core component of nucleosome. Nucleosomes wrap and compact DNA into chromatin, limiting DNA accessibility to the cellular machineries which require DNA as a template. Histones thereby play a central role in transcription regulation, DNA repair, DNA replication and chromosomal stability. DNA accessibility is regulated via a complex set of post-translational modifications of histones, also called histone code, and nucleosome remodeling. This chain is Histone H2A type 1-F, found in Rattus norvegicus (Rat).